The sequence spans 297 residues: Undecaprenyl-diphosphatase (297 aa).

7 helical membrane-spanning segments follow: residues 58–78, 103–123, 138–158, 168–188, 208–228, 243–263, and 274–294; these read PGVAFTAVIQLGSIVAVLSYF, AQMGLGILFGTIPILIGGLLI, LAAIAIVSIVMGLLLGIAEQL, LRLADGLWMGFAQALALIPGV, AARFSFLLGIPAITIAGLVEL, VLAIGTLSSLIFSWLAIAWLL, and FVVYRIIFGGVILTAIATGTL.

It belongs to the UppP family.

Its subcellular location is the cell inner membrane. The enzyme catalyses di-trans,octa-cis-undecaprenyl diphosphate + H2O = di-trans,octa-cis-undecaprenyl phosphate + phosphate + H(+). In terms of biological role, catalyzes the dephosphorylation of undecaprenyl diphosphate (UPP). Confers resistance to bacitracin. In Synechococcus sp. (strain ATCC 27144 / PCC 6301 / SAUG 1402/1) (Anacystis nidulans), this protein is Undecaprenyl-diphosphatase.